Consider the following 65-residue polypeptide: Neuropeptide-like protein 28 (65 aa).

The first 22 residues, 1 to 22, serve as a signal peptide directing secretion; that stretch reads MISTSSILILVFLLACFMATSA. Tyrosine 29, tyrosine 39, tyrosine 47, and tyrosine 55 each carry tyrosine amide. Tryptophan 63 bears the Tryptophan amide mark.

It belongs to the YARP (YGGW-amide related peptide) family.

The protein resides in the secreted. Functionally, may have antimicrobial activity. The protein is Neuropeptide-like protein 28 (nlp-28) of Caenorhabditis elegans.